Consider the following 3101-residue polypeptide: Probable polyketide synthase 32 (3101 aa).

In terms of domain architecture, Ketosynthase family 3 (KS3) spans 27-465; that stretch reads SGDVAVIGIG…GSNVCLILSE (439 aa). Active-site for beta-ketoacyl synthase activity residues include C199, H338, and H388. The tract at residues 664-697 is acyl/malonyl transferase; the sequence is GVSADIIIGHSLGEVSSAYCSGMIDFETLCYLTY. S674 serves as the catalytic For acyl/malonyl transferase activity. The N-terminal hotdog fold stretch occupies residues 965 to 1087; the sequence is GPSINNLGNN…GNFSLTKHNS (123 aa). Residues 965–1287 form the PKS/mFAS DH domain; that stretch reads GPSINNLGNN…CTLVSLPNPE (323 aa). Catalysis depends on H999, which acts as the Proton acceptor; for dehydratase activity. Residues 1104–1287 form a C-terminal hotdog fold region; it reads NFTSISKQDL…CTLVSLPNPE (184 aa). The Proton donor; for dehydratase activity role is filled by D1176. The disordered stretch occupies residues 1209-1236; that stretch reads KNGNNNDDDEESNNNNNNNNNNNNNNNN. Residues 1221 to 1236 show a composition bias toward low complexity; sequence NNNNNNNNNNNNNNNN. Positions 2550–2627 constitute a Carrier domain; that stretch reads DNNEIIRSTI…QSIEIIKSAN (78 aa). Residue S2587 is modified to O-(pantetheine 4'-phosphoryl)serine. Residues 2627 to 2648 are disordered; it reads NNKNNKNNNNNNNNKTNKNNNN.

It depends on pantetheine 4'-phosphate as a cofactor.

Functionally, probable polyketide synthase. In Dictyostelium discoideum (Social amoeba), this protein is Probable polyketide synthase 32 (pks32).